Here is a 134-residue protein sequence, read N- to C-terminus: Large ribosomal subunit protein uL18 (134 aa).

It belongs to the universal ribosomal protein uL18 family. As to quaternary structure, part of the 50S ribosomal subunit; part of the 5S rRNA/L5/L18/L25 subcomplex. Contacts the 5S and 23S rRNAs.

This is one of the proteins that bind and probably mediate the attachment of the 5S RNA into the large ribosomal subunit, where it forms part of the central protuberance. This is Large ribosomal subunit protein uL18 from Corynebacterium efficiens (strain DSM 44549 / YS-314 / AJ 12310 / JCM 11189 / NBRC 100395).